The sequence spans 190 residues: Iron-sulfur assembly protein 1 (190 aa).

The disordered stretch occupies residues 49 to 71; that stretch reads PSLKPSAAGSGSTAPKPVTEREI. Fe cation is bound by residues cysteine 116, cysteine 180, and cysteine 182.

Belongs to the HesB/IscA family.

The protein localises to the mitochondrion matrix. In terms of biological role, involved in the assembly of mitochondrial and cytoplasmic iron-sulfur proteins. Probably involved in the binding of an intermediate of Fe/S cluster assembly. This Schizosaccharomyces pombe (strain 972 / ATCC 24843) (Fission yeast) protein is Iron-sulfur assembly protein 1 (isa1).